A 72-amino-acid polypeptide reads, in one-letter code: Translation initiation factor IF-1 (72 aa).

Residues 1–72 (MSKSDYIELE…TKGRIIFRHK (72 aa)) form the S1-like domain.

It belongs to the IF-1 family. In terms of assembly, component of the 30S ribosomal translation pre-initiation complex which assembles on the 30S ribosome in the order IF-2 and IF-3, IF-1 and N-formylmethionyl-tRNA(fMet); mRNA recruitment can occur at any time during PIC assembly.

Its subcellular location is the cytoplasm. In terms of biological role, one of the essential components for the initiation of protein synthesis. Stabilizes the binding of IF-2 and IF-3 on the 30S subunit to which N-formylmethionyl-tRNA(fMet) subsequently binds. Helps modulate mRNA selection, yielding the 30S pre-initiation complex (PIC). Upon addition of the 50S ribosomal subunit IF-1, IF-2 and IF-3 are released leaving the mature 70S translation initiation complex. The chain is Translation initiation factor IF-1 from Ruthia magnifica subsp. Calyptogena magnifica.